Here is a 64-residue protein sequence, read N- to C-terminus: Conotoxin VnMRCL-04 (64 aa).

Positions 1–22 (MRCLPVFVILLLLIASAPSVDA) are cleaved as a signal peptide. A propeptide spanning residues 23–48 (RPKTKDDVPLASFHGNAERTLLNILR) is cleaved from the precursor. Position 63 is a tryptophan amide (Trp63).

Belongs to the conotoxin T superfamily. Contains 2 disulfide bonds that can be either 'C1-C3, C2-C4' or 'C1-C4, C2-C3', since these disulfide connectivities have been observed for conotoxins with cysteine framework V (for examples, see AC P0DQQ7 and AC P81755). In terms of tissue distribution, expressed by the venom duct.

The protein resides in the secreted. This is Conotoxin VnMRCL-04 from Conus ventricosus (Mediterranean cone).